The primary structure comprises 171 residues: ATP synthase subunit b (171 aa).

The helical transmembrane segment at 2-22 (FLVKMVLGFLILLSPLCATGL) threads the bilayer.

Belongs to the ATPase B chain family. F-type ATPases have 2 components, F(1) - the catalytic core - and F(0) - the membrane proton channel. F(1) has five subunits: alpha(3), beta(3), gamma(1), delta(1), epsilon(1). F(0) has three main subunits: a(1), b(2) and c(10-14). The alpha and beta chains form an alternating ring which encloses part of the gamma chain. F(1) is attached to F(0) by a central stalk formed by the gamma and epsilon chains, while a peripheral stalk is formed by the delta and b chains.

The protein resides in the cell inner membrane. Functionally, f(1)F(0) ATP synthase produces ATP from ADP in the presence of a proton or sodium gradient. F-type ATPases consist of two structural domains, F(1) containing the extramembraneous catalytic core and F(0) containing the membrane proton channel, linked together by a central stalk and a peripheral stalk. During catalysis, ATP synthesis in the catalytic domain of F(1) is coupled via a rotary mechanism of the central stalk subunits to proton translocation. Its function is as follows. Component of the F(0) channel, it forms part of the peripheral stalk, linking F(1) to F(0). The protein is ATP synthase subunit b of Helicobacter pylori (strain HPAG1).